The chain runs to 458 residues: Argininosuccinate lyase (458 aa).

It belongs to the lyase 1 family. Argininosuccinate lyase subfamily.

It is found in the cytoplasm. It carries out the reaction 2-(N(omega)-L-arginino)succinate = fumarate + L-arginine. The protein operates within amino-acid biosynthesis; L-arginine biosynthesis; L-arginine from L-ornithine and carbamoyl phosphate: step 3/3. The sequence is that of Argininosuccinate lyase from Geotalea daltonii (strain DSM 22248 / JCM 15807 / FRC-32) (Geobacter daltonii).